A 372-amino-acid polypeptide reads, in one-letter code: Queuine tRNA-ribosyltransferase (372 aa).

Residue D89 is the Proton acceptor of the active site. Residues 89 to 93 (DSGGF), D161, and G232 each bind substrate. Residues 262–268 (GIGDLPS) form an RNA binding region. D281 (nucleophile) is an active-site residue. The RNA binding; important for wobble base 34 recognition stretch occupies residues 286–290 (TKAAR). Residues C319, C321, C324, and H351 each contribute to the Zn(2+) site.

It belongs to the queuine tRNA-ribosyltransferase family. As to quaternary structure, homodimer. Within each dimer, one monomer is responsible for RNA recognition and catalysis, while the other monomer binds to the replacement base PreQ1. Zn(2+) serves as cofactor.

The enzyme catalyses 7-aminomethyl-7-carbaguanine + guanosine(34) in tRNA = 7-aminomethyl-7-carbaguanosine(34) in tRNA + guanine. Its pathway is tRNA modification; tRNA-queuosine biosynthesis. In terms of biological role, catalyzes the base-exchange of a guanine (G) residue with the queuine precursor 7-aminomethyl-7-deazaguanine (PreQ1) at position 34 (anticodon wobble position) in tRNAs with GU(N) anticodons (tRNA-Asp, -Asn, -His and -Tyr). Catalysis occurs through a double-displacement mechanism. The nucleophile active site attacks the C1' of nucleotide 34 to detach the guanine base from the RNA, forming a covalent enzyme-RNA intermediate. The proton acceptor active site deprotonates the incoming PreQ1, allowing a nucleophilic attack on the C1' of the ribose to form the product. After dissociation, two additional enzymatic reactions on the tRNA convert PreQ1 to queuine (Q), resulting in the hypermodified nucleoside queuosine (7-(((4,5-cis-dihydroxy-2-cyclopenten-1-yl)amino)methyl)-7-deazaguanosine). This chain is Queuine tRNA-ribosyltransferase, found in Chlamydia felis (strain Fe/C-56) (Chlamydophila felis).